Consider the following 299-residue polypeptide: Glycine--tRNA ligase alpha subunit (299 aa).

This sequence belongs to the class-II aminoacyl-tRNA synthetase family. As to quaternary structure, tetramer of two alpha and two beta subunits.

It localises to the cytoplasm. The catalysed reaction is tRNA(Gly) + glycine + ATP = glycyl-tRNA(Gly) + AMP + diphosphate. The protein is Glycine--tRNA ligase alpha subunit of Caulobacter vibrioides (strain ATCC 19089 / CIP 103742 / CB 15) (Caulobacter crescentus).